A 427-amino-acid polypeptide reads, in one-letter code: Serine protease inhibitor 88Ea (427 aa).

A signal peptide spans 1-18 (MHILSISLMAVLPAIALA). Asn-224 carries N-linked (GlcNAc...) asparagine glycosylation.

Belongs to the serpin family. In terms of tissue distribution, expressed in nurse cells and oocytes. Expressed in wings.

It localises to the secreted. Functionally, serine protease inhibitor with activity toward trypsin. Negatively regulates the Toll signaling pathway and suppresses the expression of the antifungal peptide drosomycin. Its negative regulation of the Toll signaling pathway also results in the inhibition of the melanization immune response via the phenoloxidase (PPO1) cascade. Essential for unfolding and expansion of the wings after emergence from the pupal case. May regulate the Toll pathway by blocking the proteolysis of the Toll ligand spz. This Drosophila melanogaster (Fruit fly) protein is Serine protease inhibitor 88Ea.